A 160-amino-acid polypeptide reads, in one-letter code: Ribosomal RNA large subunit methyltransferase H (160 aa).

S-adenosyl-L-methionine-binding positions include L76, G108, and 127-132; that span reads FGRMTF.

The protein belongs to the RNA methyltransferase RlmH family. In terms of assembly, homodimer.

The protein localises to the cytoplasm. It catalyses the reaction pseudouridine(1915) in 23S rRNA + S-adenosyl-L-methionine = N(3)-methylpseudouridine(1915) in 23S rRNA + S-adenosyl-L-homocysteine + H(+). In terms of biological role, specifically methylates the pseudouridine at position 1915 (m3Psi1915) in 23S rRNA. In Methylocella silvestris (strain DSM 15510 / CIP 108128 / LMG 27833 / NCIMB 13906 / BL2), this protein is Ribosomal RNA large subunit methyltransferase H.